Here is a 73-residue protein sequence, read N- to C-terminus: Translational regulator CsrA (73 aa).

It belongs to the CsrA/RsmA family. Homodimer; the beta-strands of each monomer intercalate to form a hydrophobic core, while the alpha-helices form wings that extend away from the core.

It is found in the cytoplasm. In terms of biological role, a translational regulator that binds mRNA to regulate translation initiation and/or mRNA stability. Usually binds in the 5'-UTR at or near the Shine-Dalgarno sequence preventing ribosome-binding, thus repressing translation. Its main target seems to be the major flagellin gene, while its function is anatagonized by FliW. In Thermosipho africanus (strain TCF52B), this protein is Translational regulator CsrA.